We begin with the raw amino-acid sequence, 336 residues long: Probable allantoicase 2 (336 aa).

It belongs to the allantoicase family.

The enzyme catalyses allantoate + H2O = (S)-ureidoglycolate + urea. Its pathway is nitrogen metabolism; (S)-allantoin degradation; (S)-ureidoglycolate from allantoate (aminidohydrolase route): step 1/1. In Burkholderia mallei (strain ATCC 23344), this protein is Probable allantoicase 2.